The primary structure comprises 490 residues: Ketol-acid reductoisomerase (NADP(+)) (490 aa).

In terms of domain architecture, KARI N-terminal Rossmann spans 17–208 (LAQCEFMNAD…GGHRAGVLKS (192 aa)). NADP(+) contacts are provided by residues 45–48 (CGAQ), Arg68, Arg76, Ser78, and 108–110 (DKQ). Residue His132 is part of the active site. NADP(+) is bound at residue Gly158. 2 consecutive KARI C-terminal knotted domains span residues 209-353 (SFIA…AEQE) and 355-486 (FDNG…MSAM). Residues Asp217, Glu221, Glu389, and Glu393 each contribute to the Mg(2+) site. Substrate is bound at residue Ser414.

The protein belongs to the ketol-acid reductoisomerase family. Mg(2+) serves as cofactor.

It catalyses the reaction (2R)-2,3-dihydroxy-3-methylbutanoate + NADP(+) = (2S)-2-acetolactate + NADPH + H(+). The enzyme catalyses (2R,3R)-2,3-dihydroxy-3-methylpentanoate + NADP(+) = (S)-2-ethyl-2-hydroxy-3-oxobutanoate + NADPH + H(+). The protein operates within amino-acid biosynthesis; L-isoleucine biosynthesis; L-isoleucine from 2-oxobutanoate: step 2/4. It functions in the pathway amino-acid biosynthesis; L-valine biosynthesis; L-valine from pyruvate: step 2/4. Involved in the biosynthesis of branched-chain amino acids (BCAA). Catalyzes an alkyl-migration followed by a ketol-acid reduction of (S)-2-acetolactate (S2AL) to yield (R)-2,3-dihydroxy-isovalerate. In the isomerase reaction, S2AL is rearranged via a Mg-dependent methyl migration to produce 3-hydroxy-3-methyl-2-ketobutyrate (HMKB). In the reductase reaction, this 2-ketoacid undergoes a metal-dependent reduction by NADPH to yield (R)-2,3-dihydroxy-isovalerate. The protein is Ketol-acid reductoisomerase (NADP(+)) of Pseudoalteromonas translucida (strain TAC 125).